Consider the following 256-residue polypeptide: tRNA (guanine-N(1)-)-methyltransferase (256 aa).

Residues G119 and 139 to 144 each bind S-adenosyl-L-methionine; that span reads IGDYVV.

The protein belongs to the RNA methyltransferase TrmD family. Homodimer.

It localises to the cytoplasm. It catalyses the reaction guanosine(37) in tRNA + S-adenosyl-L-methionine = N(1)-methylguanosine(37) in tRNA + S-adenosyl-L-homocysteine + H(+). Functionally, specifically methylates guanosine-37 in various tRNAs. The protein is tRNA (guanine-N(1)-)-methyltransferase of Nitrosospira multiformis (strain ATCC 25196 / NCIMB 11849 / C 71).